The chain runs to 714 residues: MFLRRLSIQWKITLLAGLCLLGVVALLVGLSVYRMQHSSVLVKSASTQMLDESARLRLEARGELQALRIQRYFMDAFQYGKGFSRQILFLRDQAQKRFLDAYDLREDLTRQVRTALAANPEVLGLYVVFEPNALDGKDELFVDQPALGSNDKGRFSLYWAQATPGQLESESMIESELADTSSGPSGAAYNAWYTCPKESGQPCVLDPYFDKVGERQLLMTSIAFPLELDGKVIGVMGLDINLSNLQALSEQGNRELYDGVGQVGILSPAGLFAGNSRDAGLLGKNLAKADPQHAGELLQLLAAGKSRLFNENDDLKVLQPLQPIPGAKPWGVLLEVPKSALLGPALALERQLDDMRREGTWVELGLGLGAAVLGLLVLWLSARGVTRPILGVAHMLRDIASGEGDLTQRLPHTGRDELGELAGWFNRFLDKLQPIIRDVKVSVRDARSTADQSAAISSQTSAGMQQQFREIDQVATASHEMTATAQDVARSAAQAADAARGADQATRDGLALIDRTTQSIDSLAANLTSAMGQVEQLASSSEEIGSVLEVIRAIAEQTNLLALNAAIEAARAGDAGRGFAVVADEVRNLARRTQDSVEQIRGVIEGLQQGTRDVVDAMHGSHRQAQGSVEQVDEAVAALQRIGEAVTVINDMNLQIASAAEEQSSVAEEINRNVAAIRDVTESLSSQAEESAQVSQSLNRLANHQQGLMEQFKA.

Residues 12–32 (ITLLAGLCLLGVVALLVGLSV) traverse the membrane as a helical segment. The Cache domain occupies 50–290 (LDESARLRLE…LLGKNLAKAD (241 aa)). Residues Glu-170, 208 to 210 (YFD), and Asp-239 each bind histamine. A helical membrane pass occupies residues 360-380 (TWVELGLGLGAAVLGLLVLWL). The region spanning 383 to 437 (RGVTRPILGVAHMLRDIASGEGDLTQRLPHTGRDELGELAGWFNRFLDKLQPIIR) is the HAMP domain. One can recognise a Methyl-accepting transducer domain in the interval 442 to 678 (SVRDARSTAD…EINRNVAAIR (237 aa)).

It belongs to the methyl-accepting chemotaxis (MCP) protein family. Homotetramer.

The protein localises to the cell membrane. Its function is as follows. Chemotactic-signal transducers respond to changes in the concentration of attractants and repellents in the environment, transduce a signal from the outside to the inside of the cell, and facilitate sensory adaptation through the variation of the level of methylation. TlpQ is a chemoreceptor that binds and mediates chemotaxis to histamine, a key biological signaling molecule. It binds histamine with high affinity, which permits responses to very low histamine concentrations. Chemotaxis to histamine may play a role in the virulence of P.aeruginosa by recruiting cells at the infection site and consequently modulating the expression of quorum-sensing-dependent virulence genes. TlpQ also binds and mediates chemotaxis to polyamines such as putrescine, spermidine, cadaverine, agmatine and ethylenediamine. In addition, binds the quorum-sensing signal autoinducer 2 (AI-2), thus inducing chemotaxis toward AI-2 and biofilm formation. The protein is Methyl-accepting chemotaxis protein TlpQ of Pseudomonas aeruginosa (strain ATCC 15692 / DSM 22644 / CIP 104116 / JCM 14847 / LMG 12228 / 1C / PRS 101 / PAO1).